The sequence spans 119 residues: Ribonuclease P protein component (119 aa).

It belongs to the RnpA family. In terms of assembly, consists of a catalytic RNA component (M1 or rnpB) and a protein subunit.

It catalyses the reaction Endonucleolytic cleavage of RNA, removing 5'-extranucleotides from tRNA precursor.. Its function is as follows. RNaseP catalyzes the removal of the 5'-leader sequence from pre-tRNA to produce the mature 5'-terminus. It can also cleave other RNA substrates such as 4.5S RNA. The protein component plays an auxiliary but essential role in vivo by binding to the 5'-leader sequence and broadening the substrate specificity of the ribozyme. This is Ribonuclease P protein component from Nitrosococcus oceani (strain ATCC 19707 / BCRC 17464 / JCM 30415 / NCIMB 11848 / C-107).